Consider the following 468-residue polypeptide: Zinc-regulated transporter 1 (468 aa).

An N-terminal signal peptide occupies residues 1–17; the sequence is MKFTHLFFIGLLTKVYT. At 18-185 the chain is on the extracellular side; it reads ETVTVLSTRS…VKRDYDIPLR (168 aa). Asn57 and Asn67 each carry an N-linked (GlcNAc...) asparagine glycan. Residues 186-206 traverse the membrane as a helical segment; that stretch reads IGLLFVILVTSGIGSFGPIVL. The Cytoplasmic segment spans residues 207-217; that stretch reads KQFVNLSQENY. The helical transmembrane segment at 218–238 threads the bilayer; that stretch reads IIVIIKQFGTGIIISTAFVHL. The Extracellular segment spans residues 239–257; that stretch reads MTHAQLMWSNSCLKIKYEG. The helical transmembrane segment at 258 to 278 threads the bilayer; that stretch reads TGASITMAGIFIAFIIEYIAL. Residues 279 to 314 are Cytoplasmic-facing; sequence RIVNARDTGKVDKKEIEETSSNEQSLHGISVNDKIS. The chain crosses the membrane as a helical span at residues 315–335; that stretch reads VMILEAGIIFHSILIGITLVV. At 336–338 the chain is on the extracellular side; the sequence is TDD. The chain crosses the membrane as a helical span at residues 339–359; that stretch reads VYFITLFIVIVFHQFFEGLAL. The Cytoplasmic segment spans residues 360–374; the sequence is SSRIISITNASLSTK. Residues 375–395 form a helical membrane-spanning segment; that stretch reads LVMALMFALITPIGMAIGIGV. The Extracellular segment spans residues 396 to 406; that stretch reads LNKFNGNDPST. Residues 407 to 427 traverse the membrane as a helical segment; that stretch reads LIALGTLDSFSAGVLLWTGLI. At 428–447 the chain is on the cytoplasmic side; the sequence is EMWSHDWLHGHLRNSSFVKT. The chain crosses the membrane as a helical span at residues 448–468; the sequence is TVALVSLILGMLLMSLLGNWA.

This sequence belongs to the ZIP transporter (TC 2.A.5) family.

It is found in the cell membrane. The catalysed reaction is Zn(2+)(in) = Zn(2+)(out). Zinc transporter that acts with PRA1 in sequestration of zinc from host tissues during infection. The pH-regulated antigen 1 (PRA1) binds zinc from its environment and then reassociates with ZRT1 to acquire this essential metal. The protein is Zinc-regulated transporter 1 (ZRT101) of Candida albicans (strain SC5314 / ATCC MYA-2876) (Yeast).